A 445-amino-acid chain; its full sequence is Chromosome partition protein MukF (445 aa).

A leucine-zipper region spans residues L212 to I240.

This sequence belongs to the MukF family. Interacts, and probably forms a ternary complex, with MukE and MukB via its C-terminal region. The complex formation is stimulated by calcium or magnesium. It is required for an interaction between MukE and MukB.

It localises to the cytoplasm. It is found in the nucleoid. Functionally, involved in chromosome condensation, segregation and cell cycle progression. May participate in facilitating chromosome segregation by condensation DNA from both sides of a centrally located replisome during cell division. Not required for mini-F plasmid partitioning. Probably acts via its interaction with MukB and MukE. Overexpression results in anucleate cells. It has a calcium binding activity. This is Chromosome partition protein MukF from Mannheimia succiniciproducens (strain KCTC 0769BP / MBEL55E).